Here is a 271-residue protein sequence, read N- to C-terminus: MAGLEVLFASAAPSMSCPQDALVCFLHWEVVTNGYYALGTGDQPGPSDKKSELLPAKWNSNKELYALRYESKDGARKLLLKAVSVENGMIINVLELGTQQVADLTLNLDDYIDAEDLSDFHRTYKNSEELRSQIRSGIITPIHEQWEKARANSPPREFPPATAREVDPLQISSHRPHTSRQPAWRDPLSPFAVGGDDLDPFGCQRGGMIVDPLRSGFPRVLIDPSSGLPNRLPPGAVPPGARFDPFGPIGTSPSGPNPDHLPPPGYDDMYL.

Ala2 carries the post-translational modification N-acetylalanine. The interval 2-150 (AGLEVLFASA…PIHEQWEKAR (149 aa)) is important for homodimerization and interaction with FBXO7. Phosphoserine occurs at positions 153 and 189. An Omega-N-methylarginine modification is found at Arg205. Arg219 carries the asymmetric dimethylarginine modification. The disordered stretch occupies residues 226–271 (SGLPNRLPPGAVPPGARFDPFGPIGTSPSGPNPDHLPPPGYDDMYL). The residue at position 231 (Arg231) is an Omega-N-methylarginine. Ser252 carries the phosphoserine modification. Over residues 255 to 265 (GPNPDHLPPPG) the composition is skewed to pro residues.

Belongs to the proteasome inhibitor PI31 family. In terms of assembly, monomer and homodimer. Interacts with FBXO7.

Its subcellular location is the cytoplasm. The protein resides in the endoplasmic reticulum. Its function is as follows. Plays an important role in control of proteasome function. Inhibits the hydrolysis of protein and peptide substrates by the 20S proteasome. Also inhibits the activation of the proteasome by the proteasome regulatory proteins PA700 and PA28. This is Proteasome inhibitor PI31 subunit (Psmf1) from Mus musculus (Mouse).